Reading from the N-terminus, the 154-residue chain is Proteinase inhibitor type-2 P303.51 (154 aa).

The first 25 residues, 1–25, serve as a signal peptide directing secretion; sequence MAVHKEVNFVAYLLIVLGLLVLVSA. 2 repeat units span residues 31–87 and 88–147. Disulfide bonds link Cys-34–Cys-122, Cys-38–Cys-118, Cys-46–Cys-128, Cys-58–Cys-95, Cys-61–Cys-79, Cys-62–Cys-91, Cys-68–Cys-104, and Cys-121–Cys-139.

It belongs to the protease inhibitor I20 (potato type II proteinase inhibitor) family.

This chain is Proteinase inhibitor type-2 P303.51, found in Solanum tuberosum (Potato).